Reading from the N-terminus, the 1449-residue chain is MAASSSSGRRRYDVFPSFSGVDVRKTFLSHLIEALDGKSINTFIDHGIERSRTIAPELISAIREARISIVIFSKNYASSTWCLNELVEIHKCFNDLGQMVIPVFYDVDPSEVRKQTGEFGKVFEKTCEVSKDKQPGDQKQRWVQALTDIANIAGEDLLNGPNEAHMVEKISNDVSNKLITRSKCFDDFVGIEAHIEAIKSVLCLESKEARMVGIWGQSGIGKSTIGRALFSQLSIQFPLRAFLTYKSTSGSDVSGMKLSWEKELLSEILGQKDIKIEHFGVVEQRLKHKKVLILLDDVDNLEFLKTLVGKAEWFGSGSRIIVITQDRQFLKAHDIDLVYEVKLPSQGLALTMLCRSAFGKDSPPDDFKELAFEVAKLAGHLPLGLNVLGSSLRRRGKKEWMEMMPRLRNGLNGDIMKTLRVSYDRLHQKDQDMFLCIACLFNGFEVSYVKDLLEDNVGLTMLSEKSLIRITPDGHIEMHNLLEKLGREIDRAKSKGNPGKRQFLTNFEDIHEVVTEKTGTETLLGIRLPFEEYFSTRPLLIDKESFKGMRNLQYLKIGDWSDGGQPQSLVYLPLKLRLLDWDDCPLKSLPSTFKAEYLVNLIMKYSKLEKLWEGTLPLGSLKKMNLLCSKNLKEIPDLSNARNLEELDLEGCESLVTLPSSIQNAIKLRKLHCSGVILIDLKSLEGMCNLEYLSVDCSRVEGTQGIVYFPSKLRLLLWNNCPLKRLHSNFKVEYLVKLRMENSDLEKLWDGTQPLGRLKQMFLRGSKYLKEIPDLSLAINLEEVDICKCESLVTFPSSMQNAIKLIYLDISDCKKLESFPTDLNLESLEYLNLTGCPNLRNFPAIKMGCSDVDFPEGRNEIVVEDCFWNKNLPAGLDYLDCLMRCMPCEFRPEYLVFLNVRCYKHEKLWEGIQSLGSLEEMDLSESENLTEIPDLSKATNLKHLYLNNCKSLVTLPSTIGNLQKLVRLEMKECTGLEVLPTDVNLSSLETLDLSGCSSLRTFPLISKSIKWLYLENTAIEEILDLSKATKLESLILNNCKSLVTLPSTIGNLQNLRRLYMKRCTGLEVLPTDVNLSSLGILDLSGCSSLRTFPLISTNIVWLYLENTAIGEVPCCIEDFTRLRVLLMYCCQRLKNISPNIFRLRSLMFADFTDCRGVIKALSDATVVATMEDSVSCVPLSENIEYTCERFWGELYGDGDWDLGTEYFSFRNCFKLDRDARELILRSCFKPVALPGGEIPKYFTYRAYGDSLTVTLPRSSLSQSFLRFKACLVVDPLSEGKGFYRYLEVNFGFNGKQYQKSFLEDEELEFCKTDHLFFCSFKFESEMTFNDVEFKFCCSNRIKECGVRLMYVSQETEYNQQTTRSKKRMRMTSGTSEEYINLAGDQIVADTGLAALNMELSLGEGEASSSTSLEGEALSVDYMITKEQDEDIPFLDPVSDGTWRSFYSAE.

One can recognise a TIR domain in the interval 10–178; the sequence is RRYDVFPSFS…KISNDVSNKL (169 aa). Glutamate 85 is an active-site residue. The NB-ARC domain maps to 192 to 446; the sequence is EAHIEAIKSV…IACLFNGFEV (255 aa). 19 LRR repeats span residues 549–573, 574–595, 597–618, 619–642, 644–665, 687–710, 712–732, 733–755, 756–779, 802–825, 826–849, 915–939, 941–962, 963–985, 986–1011, 1028–1052, 1053–1077, 1096–1119, and 1120–1143; these read MRNLQYLKIGDWSDGGQPQSLVYLP, LKLRLLDWDDCPLKSLPSTFKA, YLVNLIMKYSKLEKLWEGTLPL, GSLKKMNLLCSKNLKEIPDLSNAR, LEELDLEGCESLVTLPSSIQNA, MCNLEYLSVDCSRVEGTQGIVYFP, KLRLLLWNNCPLKRLHSNFKV, EYLVKLRMENSDLEKLWDGTQPL, GRLKQMFLRGSKYLKEIPDLSLAI, AIKLIYLDISDCKKLESFPTDLNL, ESLEYLNLTGCPNLRNFPAIKMGC, LGSLEEMDLSESENLTEIPDLSKAT, LKHLYLNNCKSLVTLPSTIGNL, QKLVRLEMKECTGLEVLPTDVNL, SSLETLDLSGCSSLRTFPLISKSIKW, ATKLESLILNNCKSLVTLPSTIGNL, QNLRRLYMKRCTGLEVLPTDVNLSS, STNIVWLYLENTAIGEVPCCIEDF, and TRLRVLLMYCCQRLKNISPNIFRL.

In terms of assembly, interacts with RSH1.

It catalyses the reaction NAD(+) + H2O = ADP-D-ribose + nicotinamide + H(+). Functionally, TIR-NB-LRR receptor-like protein that confers resistance to the pathogen Hyaloperonospora arabidopsis isolate Noco2 (downy mildew disease). Confers resistance to H.arabidopsis isolates Emoy2, Emwa1 and Noco2. The polypeptide is Disease resistance protein RPP5 (Arabidopsis thaliana (Mouse-ear cress)).